Here is a 184-residue protein sequence, read N- to C-terminus: Transcription termination/antitermination protein NusG (184 aa).

The KOW domain occupies 133-163 (EGDQVRVVSGPFADFTGTVTEINPERGKVKV).

This sequence belongs to the NusG family.

Functionally, participates in transcription elongation, termination and antitermination. The sequence is that of Transcription termination/antitermination protein NusG from Thermus thermophilus (strain ATCC 27634 / DSM 579 / HB8).